A 359-amino-acid chain; its full sequence is Structure-specific endonuclease subunit SLX1 homolog (359 aa).

The region spanning 9-91 is the GIY-YIG domain; sequence GLFACYCLVA…TYPTRSRYVN (83 aa). An SLX1-type zinc finger spans residues 192–238; sequence CPICQDGVSPSNVQCMQCSARFCITCAGKLFTRRNTLIPCFGKCPIC. A disordered region spans residues 256 to 359; sequence VAGRKSVPHK…LPSDVISITD (104 aa). A compositionally biased stretch (polar residues) spans 269–281; that stretch reads VDGQSSLSQNSSY. Residues 295-306 are compositionally biased toward basic and acidic residues; it reads EPEKDDISRDES. The span at 316 to 326 shows a compositional bias: low complexity; it reads SSVALSDSSRS.

Belongs to the SLX1 family. As to quaternary structure, forms a heterodimer with a member of the SLX4 family. Requires a divalent metal cation as cofactor.

The protein resides in the nucleus. Functionally, catalytic subunit of a heterodimeric structure-specific endonuclease that resolves DNA secondary structures generated during DNA repair and recombination. Has endonuclease activity towards branched DNA substrates, introducing single-strand cuts in duplex DNA close to junctions with ss-DNA. This chain is Structure-specific endonuclease subunit SLX1 homolog, found in Giardia intestinalis (strain ATCC 50803 / WB clone C6) (Giardia lamblia).